A 316-amino-acid polypeptide reads, in one-letter code: Glutathione synthetase (316 aa).

The ATP-grasp domain maps to 123–309; it reads NEKISTLSFK…ISGILLDSIE (187 aa). 149–206 contributes to the ATP binding site; sequence FQEKFGDIILKPINKMGGDSVFYVKKNDPNVSVIIDQLTNYGNSFCLIQEYIKEILNG. Mg(2+)-binding residues include E280 and N282.

The protein belongs to the prokaryotic GSH synthase family. The cofactor is Mg(2+). Mn(2+) serves as cofactor.

The catalysed reaction is gamma-L-glutamyl-L-cysteine + glycine + ATP = glutathione + ADP + phosphate + H(+). The protein operates within sulfur metabolism; glutathione biosynthesis; glutathione from L-cysteine and L-glutamate: step 2/2. The polypeptide is Glutathione synthetase (Wigglesworthia glossinidia brevipalpis).